The following is a 342-amino-acid chain: Holliday junction branch migration complex subunit RuvB (342 aa).

The segment at methionine 1–tyrosine 185 is large ATPase domain (RuvB-L). Residues leucine 24, arginine 25, glycine 66, lysine 69, threonine 70, serine 71, glutamate 132 to tyrosine 134, arginine 175, tyrosine 185, and arginine 222 each bind ATP. Residue threonine 70 coordinates Mg(2+). Positions glycine 186–glutamate 256 are small ATPAse domain (RuvB-S). Residues alanine 259 to valine 342 form a head domain (RuvB-H) region. Residues arginine 314 and arginine 319 each coordinate DNA.

The protein belongs to the RuvB family. Homohexamer. Forms an RuvA(8)-RuvB(12)-Holliday junction (HJ) complex. HJ DNA is sandwiched between 2 RuvA tetramers; dsDNA enters through RuvA and exits via RuvB. An RuvB hexamer assembles on each DNA strand where it exits the tetramer. Each RuvB hexamer is contacted by two RuvA subunits (via domain III) on 2 adjacent RuvB subunits; this complex drives branch migration. In the full resolvosome a probable DNA-RuvA(4)-RuvB(12)-RuvC(2) complex forms which resolves the HJ.

Its subcellular location is the cytoplasm. It catalyses the reaction ATP + H2O = ADP + phosphate + H(+). In terms of biological role, the RuvA-RuvB-RuvC complex processes Holliday junction (HJ) DNA during genetic recombination and DNA repair, while the RuvA-RuvB complex plays an important role in the rescue of blocked DNA replication forks via replication fork reversal (RFR). RuvA specifically binds to HJ cruciform DNA, conferring on it an open structure. The RuvB hexamer acts as an ATP-dependent pump, pulling dsDNA into and through the RuvAB complex. RuvB forms 2 homohexamers on either side of HJ DNA bound by 1 or 2 RuvA tetramers; 4 subunits per hexamer contact DNA at a time. Coordinated motions by a converter formed by DNA-disengaged RuvB subunits stimulates ATP hydrolysis and nucleotide exchange. Immobilization of the converter enables RuvB to convert the ATP-contained energy into a lever motion, pulling 2 nucleotides of DNA out of the RuvA tetramer per ATP hydrolyzed, thus driving DNA branch migration. The RuvB motors rotate together with the DNA substrate, which together with the progressing nucleotide cycle form the mechanistic basis for DNA recombination by continuous HJ branch migration. Branch migration allows RuvC to scan DNA until it finds its consensus sequence, where it cleaves and resolves cruciform DNA. The chain is Holliday junction branch migration complex subunit RuvB from Anaeromyxobacter sp. (strain K).